The primary structure comprises 231 residues: MLKRFFITGTDTSVGKTVVSRALLQALSSGGKSVAGYKPVAKGSKETPEGMRNKDALVLQSVSSLELPYEAINPIALSEEESSVAHSCPINYTLLSNGLASLSDKVDHVVVEGTGGWRSLMNDLRPLSEWVVQEQLPVLMVVGIQEGCINHALLTAQAVANDGLPLIGWVANRINPGLAHYAEIIDVLGKKLPAPLIGELPYLPRAEQRELGQYIRLSMLGSVLAVDRIMA.

13 to 18 contributes to the ATP binding site; the sequence is SVGKTV. Thr17 contacts Mg(2+). The active site involves Lys38. Residues Asp55, 112-115, 172-173, 201-203, and Gln208 each bind ATP; these read EGTG, NR, and PYL. Asp55 and Glu112 together coordinate Mg(2+).

The protein belongs to the dethiobiotin synthetase family. In terms of assembly, homodimer. Requires Mg(2+) as cofactor.

It is found in the cytoplasm. It carries out the reaction (7R,8S)-7,8-diammoniononanoate + CO2 + ATP = (4R,5S)-dethiobiotin + ADP + phosphate + 3 H(+). It functions in the pathway cofactor biosynthesis; biotin biosynthesis; biotin from 7,8-diaminononanoate: step 1/2. Catalyzes a mechanistically unusual reaction, the ATP-dependent insertion of CO2 between the N7 and N8 nitrogen atoms of 7,8-diaminopelargonic acid (DAPA, also called 7,8-diammoniononanoate) to form a ureido ring. The protein is ATP-dependent dethiobiotin synthetase BioD 2 of Salmonella typhi.